The chain runs to 736 residues: MKKSRSVMAVTADDNLKDYFECSLSKSYSSSSYTLGIDLWRGRRCCSGNLQLPPLSQRQSERARTPEGDGISRPTTLPLTTLPSIAITTVSQECFDVENGPSPGRSPLDPQASSSSGLVLHAAFPGHSQRRESFLYRSDSDYDLSPKAMSRNSSLPSEQHGDDLIVTPFAQVLASLRIVRNNFTLLTNLHGAPNKRSPAASQAPVTRVSLQEESYQKLAMETLEELDWCLDQLETIQTYRSVSEMASNKFKRMLNRELTHLSEMSRSGNQVSEYISNTFLDKQNDVEIPSPTQKDREKKKKQQLMTQISGVKKLMHSSSLNNTSISRFGVNTENEDHLAKELEDLNKWGLNIFNVAGYSHNRPLTCIMYAIFQERDLLKTFKISSDTFVTYMMTLEDHYHSDVAYHNSLHAADVAQSTHVLLSTPALDAVFTDLEILAAIFAAAIHDVDHPGVSNQFLINTNSELALMYNDESVLENHHLAVGFKLLQEEHCDIFQNLTKKQRQTLRKMVIDMVLATDMSKHMSLLADLKTMVETKKVTSSGVLLLDNYTDRIQVLRNMVHCADLSNPTKSLELYRQWTDRIMEEFFQQGDKERERGMEISPMCDKHTASVEKSQVGFIDYIVHPLWETWADLVQPDAQDILDTLEDNRNWYQSMIPQSPSPPLDERSRDCQGLMEKFQFELTLEEEDSEGPEKEGEGPNYFSSTKTLCVIDPENRDSLEETDIDIATEDKSLIDT.

Disordered stretches follow at residues 51–77 (QLPPLSQRQSERARTPEGDGISRPTTL) and 96–116 (DVENGPSPGRSPLDPQASSSS). Phosphoserine is present on S56. The residue at position 290 (S290) is a Phosphoserine. The region spanning 330–659 (VNTENEDHLA…NWYQSMIPQS (330 aa)) is the PDEase domain. The Proton donor role is filled by H406. Position 406 (H406) interacts with 3',5'-cyclic AMP. Residues H406 and H410 each contribute to the AMP site. Residues H410, H446, D447, and D564 each coordinate Zn(2+). The AMP site is built by D447, D564, Q615, and F618. Position 447 (D447) interacts with Mg(2+). A Mn(2+)-binding site is contributed by D447. 3',5'-cyclic AMP is bound by residues Q615 and F618. A phosphoserine mark is found at S659 and S661. The segment at 685–736 (EEEDSEGPEKEGEGPNYFSSTKTLCVIDPENRDSLEETDIDIATEDKSLIDT) is disordered.

Belongs to the cyclic nucleotide phosphodiesterase family. PDE4 subfamily. In terms of assembly, interacts with DISC1. It depends on Zn(2+) as a cofactor. The cofactor is Mg(2+). Mn(2+) serves as cofactor. In terms of tissue distribution, widely expressed. As to expression, expressed in brain, heart, lung and liver. Expressed in liver and brain.

It localises to the cytoplasm. Its subcellular location is the cell membrane. The enzyme catalyses 3',5'-cyclic AMP + H2O = AMP + H(+). Its pathway is purine metabolism; 3',5'-cyclic AMP degradation; AMP from 3',5'-cyclic AMP: step 1/1. Inhibited by rolipram. Hydrolyzes the second messenger cAMP, which is a key regulator of many important physiological processes. The sequence is that of 3',5'-cyclic-AMP phosphodiesterase 4B from Rattus norvegicus (Rat).